The chain runs to 304 residues: Virulence protein VirA (304 aa).

Could be involved in the biosynthesis of a major surface antigen important for virulence. This is Virulence protein VirA (virA) from Vibrio anguillarum (strain ATCC 68554 / 775) (Listonella anguillarum).